The chain runs to 620 residues: Glutathione-regulated potassium-efflux system protein KefC (620 aa).

12 helical membrane passes run 4-24 (HTLI…PIAV), 26-46 (LGLG…PWGL), 54-74 (SILH…GLEL), 90-110 (GALQ…LLGL), 114-134 (VAEL…MQAM), 149-169 (FAVL…IPLL), 178-198 (MGAF…VVLL), 218-238 (VFSA…EEVG), 270-290 (GLLL…GTLL), 294-314 (LRIV…LWLI), 327-347 (WFAV…GAAQ), and 359-379 (SLTL…VILN). The 120-residue stretch at 399-518 (QPRVIIAGFG…AGVEKPERET (120 aa)) folds into the RCK N-terminal domain. The tract at residues 597–620 (GWQGTEEGKHTGNMADEPETKPSS) is disordered.

The protein belongs to the monovalent cation:proton antiporter 2 (CPA2) transporter (TC 2.A.37) family. KefC subfamily. As to quaternary structure, homodimer. Interacts with the regulatory subunit KefF.

The protein resides in the cell inner membrane. Functionally, pore-forming subunit of a potassium efflux system that confers protection against electrophiles. Catalyzes K(+)/H(+) antiport. In Escherichia coli O127:H6 (strain E2348/69 / EPEC), this protein is Glutathione-regulated potassium-efflux system protein KefC.